The chain runs to 319 residues: MGGLSLLQLPRDKFRKSSFFVWVIILFQKAFSMPLGVVTNSTLEVTEIDQLVCKDHLASTDQLKSVGLNLEGSGVSTDIPSATKRWGFRSGVPPKVVSYEAGEWAENCYNLEIKKPDGSECLPPPPDGVRGFPRCRYVHKAQGTGPCPGDYAFHKDGAFFLYDRLASTVIYRGVNFAEGVIAFLILAKPKETFLQSPPIREAVNYTENTSSYYATSYLEYEIENFGAQHSTTLFKIDNNTFVRLDRPHTPQFLFQLNDTIHLHQQLSNTTGRLIWTLDANINADIGEWAFWENKKKSLRTTTWRRAVFRSFIAQRDRRR.

An N-terminal signal peptide occupies residues 1 to 32 (MGGLSLLQLPRDKFRKSSFFVWVIILFQKAFS). An N-linked (GlcNAc...) asparagine; by host glycan is attached at N40. Cystine bridges form between C108-C135 and C121-C147. N204, N208, N238, N257, and N268 each carry an N-linked (GlcNAc...) asparagine; by host glycan.

The protein belongs to the filoviruses glycoprotein family.

The protein localises to the secreted. The sequence is that of Super small secreted glycoprotein (GP) from Sudan ebolavirus (strain Human/Uganda/Gulu/2000) (SEBOV).